Reading from the N-terminus, the 586-residue chain is Phosphomethylpyrimidine synthase (586 aa).

A disordered region spans residues 1 to 33; that stretch reads MKQSVSAEQIELKSSLPGSKKVYVDGPREGMKV. The span at 22–33 shows a compositional bias: basic and acidic residues; sequence VYVDGPREGMKV. Substrate is bound by residues Asn-193, Met-222, Tyr-251, His-287, 307-309, 348-351, and Glu-387; these read SRG and DGLR. His-391 serves as a coordination point for Zn(2+). Substrate is bound at residue Tyr-414. His-455 serves as a coordination point for Zn(2+). [4Fe-4S] cluster contacts are provided by Cys-535, Cys-538, and Cys-543.

This sequence belongs to the ThiC family. Requires [4Fe-4S] cluster as cofactor.

The catalysed reaction is 5-amino-1-(5-phospho-beta-D-ribosyl)imidazole + S-adenosyl-L-methionine = 4-amino-2-methyl-5-(phosphooxymethyl)pyrimidine + CO + 5'-deoxyadenosine + formate + L-methionine + 3 H(+). Its pathway is cofactor biosynthesis; thiamine diphosphate biosynthesis. Functionally, catalyzes the synthesis of the hydroxymethylpyrimidine phosphate (HMP-P) moiety of thiamine from aminoimidazole ribotide (AIR) in a radical S-adenosyl-L-methionine (SAM)-dependent reaction. The sequence is that of Phosphomethylpyrimidine synthase from Bacillus cereus (strain B4264).